A 64-amino-acid chain; its full sequence is Large ribosomal subunit protein uL29 (64 aa).

It belongs to the universal ribosomal protein uL29 family.

The chain is Large ribosomal subunit protein uL29 from Cupriavidus metallidurans (strain ATCC 43123 / DSM 2839 / NBRC 102507 / CH34) (Ralstonia metallidurans).